The primary structure comprises 36 residues: Lambda-hexatoxin-Hv1b (36 aa).

4 disulfide bridges follow: Cys-3-Cys-17, Cys-10-Cys-22, Cys-13-Cys-14, and Cys-16-Cys-33.

This sequence belongs to the neurotoxin 11 (kappa toxin) family. Expressed by the venom gland.

It is found in the secreted. In terms of biological role, this excitatory toxin inhibits insect calcium-activated potassium (KCa) channels (Slo-type). This is Lambda-hexatoxin-Hv1b from Hadronyche versuta (Blue mountains funnel-web spider).